A 453-amino-acid chain; its full sequence is Kynurenine 3-monooxygenase (453 aa).

The protein belongs to the aromatic-ring hydroxylase family. KMO subfamily. Requires FAD as cofactor.

It carries out the reaction L-kynurenine + NADPH + O2 + H(+) = 3-hydroxy-L-kynurenine + NADP(+) + H2O. Its pathway is cofactor biosynthesis; NAD(+) biosynthesis; quinolinate from L-kynurenine: step 1/3. Its function is as follows. Catalyzes the hydroxylation of L-kynurenine (L-Kyn) to form 3-hydroxy-L-kynurenine (L-3OHKyn). Required for synthesis of quinolinic acid. This is Kynurenine 3-monooxygenase from Salinispora tropica (strain ATCC BAA-916 / DSM 44818 / JCM 13857 / NBRC 105044 / CNB-440).